Reading from the N-terminus, the 42-residue chain is Kappa-actitoxin-Ael2a (42 aa).

3 cysteine pairs are disulfide-bonded: C4–C37, C6–C30, and C20–C38.

Belongs to the sea anemone type 3 (BDS) potassium channel toxin family.

Its subcellular location is the secreted. It localises to the nematocyst. Its function is as follows. Peptide with both antimicrobial and neurotoxin activities. This toxin acts both on ERG potassium channels and sodium channels. It potently and reversibly inhibits human Kv11.1/KCNH2/ERG1 (IC(50)=34 nM), rat Kv11.1/KCNH2/ERG1 and Kv11.3/KCNH7/ERG3 voltage-gated potassium channels in a similar potency. It acts as a gating-modifier toxin that shifts the voltage-dependence of ERG activation in the positive direction and suppresses its current amplitudes elicited by strong depolarizing pulses. On sodium channels, it blocks Nav1.2/SCN2A (EC(50)=31 nM), Nav1.3/SCN3A, Nav1.4/SCN4A, Nav1.5/SCN5A, Nav1.6/SCN8A, Nav1.8/SCN10A (EC(50)=92 nM). It may act by binding at site 1 or close by, only when the pore is in an open configuration. Shows antibacterial activity against the Gram-negative bacterium S.typhimurium, but not on the bacteria B.subtilis, S.aureus, and P.aeruginosa. In vivo, this toxin does not induce neurotoxic symptoms when injected into mice. The polypeptide is Kappa-actitoxin-Ael2a (Anthopleura elegantissima (Green aggregating anemone)).